A 142-amino-acid chain; its full sequence is Large ribosomal subunit protein uL13 (142 aa).

Belongs to the universal ribosomal protein uL13 family. In terms of assembly, part of the 50S ribosomal subunit.

In terms of biological role, this protein is one of the early assembly proteins of the 50S ribosomal subunit, although it is not seen to bind rRNA by itself. It is important during the early stages of 50S assembly. This chain is Large ribosomal subunit protein uL13, found in Xylella fastidiosa (strain M23).